A 172-amino-acid polypeptide reads, in one-letter code: MNRAEKREFVTWLNEAFQKSGSVVVAHYSGLTVSQMNDLRSKMGEAGGAVKVAKNRLAKIALQGTESESIAGLFTGQTLIAYSEDPITAPKVAVDFAKSNDKFVILGGSMGATSLTVDAVKSLASLPSLNELRAKLVGMISTPATRIAQVVNAPAGQVARVIGAYAQEDKAA.

The protein belongs to the universal ribosomal protein uL10 family. Part of the ribosomal stalk of the 50S ribosomal subunit. The N-terminus interacts with L11 and the large rRNA to form the base of the stalk. The C-terminus forms an elongated spine to which L12 dimers bind in a sequential fashion forming a multimeric L10(L12)X complex.

Forms part of the ribosomal stalk, playing a central role in the interaction of the ribosome with GTP-bound translation factors. The polypeptide is Large ribosomal subunit protein uL10 (Bartonella tribocorum (strain CIP 105476 / IBS 506)).